The sequence spans 690 residues: MTGKRLKASVIIDLNGNLSRRSRQYSNQINALSRSGQSSLRALRMEVVRVSGAIDRMGSLSTRTFRMLSAGALGIAGVGYTANKLFIGAAAQREQQIIAMNSLYHGDKVRAQAMMAWAKQNAKDTTWGLSGVLDEIRSSKGFGMTDEQTKQFITMLQDQGAMHGWDLPTAQGASLQLKQMFARQQITAADANLLTGYGINVYQALADATGTDVKKIRDLGTKGKLGMKSILTVFRTLSEQSKGAQASAMNSWDGMFAQMEANLLEFRIKVANSGPFEEIKNEMRRVLNWHDMADKSGELDALAENIGQKFLTTFRTVKISAQELWRWLKPGKDALAWVDQNIVSLKKLAAVLVSVWLANKALRAGWAVAKPSWQVASYPFKTGRRMWRWMRNRKRGQAGLPVPDAMTSETLLQGIGIQRVFVINWPRGFGDYGSGGGRRVRSGGRMAPLLPRQPLLLSGPQPLALPAPRPVLALPPPGVPVTARPAPLPLPGKSGLLSRLAGSAAGQLVTGTVGKLADAGRAVGGWFSGIGNKLAGSAIGRVVTKGAGALGWMGKGAGRALSRLGGPVMGALQLAPVLMDEQASTHEKAGAIGSTAGAWLGGAVGSLAGPLGTVAGATLGSVAGEYLGGFVTDLYQKWTATDKEPQEQKVNAEASLRVELGEGLRLTSSRVTEDGMGLNIYAGDNYITGW.

The protein belongs to the Mulikevirus tape measure protein family.

The protein localises to the host cytoplasm. Functionally, serves as a base for tail tube protein polymerization and acts as a template for tail length determination. Might remain in the tube and be ejected from the tail prior to the DNA during DNA ejection (Potential). This is Probable tape measure protein from Enterobacteriaceae (Bacteriophage Mu).